The following is a 290-amino-acid chain: Serine protease 27 (290 aa).

Residues 1 to 22 (MRRPAAVPLLLLLCFGSQRAKA) form the signal peptide. A propeptide spans 23–34 (ATACGRPRMLNR) (activation peptide). Residues 35–277 (MVGGQDTQEG…HHNWIHRIIP (243 aa)) enclose the Peptidase S1 domain. Asn-55 is a glycosylation site (N-linked (GlcNAc...) asparagine). Cys-60 and Cys-76 are disulfide-bonded. Catalysis depends on His-75, which acts as the Charge relay system. Residue Asn-79 is glycosylated (N-linked (GlcNAc...) asparagine). Asp-124 serves as the catalytic Charge relay system. Intrachain disulfides connect Cys-158–Cys-235, Cys-191–Cys-214, and Cys-225–Cys-253. The active-site Charge relay system is the Ser-229.

This sequence belongs to the peptidase S1 family. In terms of processing, N-glycosylated. In terms of tissue distribution, expressed predominantly in the pancreas.

It is found in the secreted. The polypeptide is Serine protease 27 (PRSS27) (Homo sapiens (Human)).